Consider the following 33-residue polypeptide: Cysteine-rich venom protein (33 aa).

Residues 1–33 form a disordered region; that stretch reads NVDFNSESTRRKKKQKEIVDLHNSLRRRVSPTA. Positions 24–33 are enriched in basic residues; sequence SLRRRVSPTA.

The protein belongs to the CRISP family. Contains 8 disulfide bonds. In terms of tissue distribution, expressed by the venom gland.

The protein resides in the secreted. In terms of biological role, blocks contraction of smooth muscle elicited by high potassium-induced depolarization, but does not block caffeine-stimulated contraction. May target voltage-gated calcium channels on smooth muscle (Cav). In Naja naja (Indian cobra), this protein is Cysteine-rich venom protein.